Consider the following 387-residue polypeptide: Anhydro-N-acetylmuramic acid kinase (387 aa).

17–24 (GTSMDGVD) provides a ligand contact to ATP.

The protein belongs to the anhydro-N-acetylmuramic acid kinase family.

It carries out the reaction 1,6-anhydro-N-acetyl-beta-muramate + ATP + H2O = N-acetyl-D-muramate 6-phosphate + ADP + H(+). It functions in the pathway amino-sugar metabolism; 1,6-anhydro-N-acetylmuramate degradation. Its pathway is cell wall biogenesis; peptidoglycan recycling. Its function is as follows. Catalyzes the specific phosphorylation of 1,6-anhydro-N-acetylmuramic acid (anhMurNAc) with the simultaneous cleavage of the 1,6-anhydro ring, generating MurNAc-6-P. Is required for the utilization of anhMurNAc either imported from the medium or derived from its own cell wall murein, and thus plays a role in cell wall recycling. This is Anhydro-N-acetylmuramic acid kinase from Burkholderia mallei (strain ATCC 23344).